A 151-amino-acid polypeptide reads, in one-letter code: Large ribosomal subunit protein bL9 (151 aa).

This sequence belongs to the bacterial ribosomal protein bL9 family.

In terms of biological role, binds to the 23S rRNA. The sequence is that of Large ribosomal subunit protein bL9 from Pelobacter propionicus (strain DSM 2379 / NBRC 103807 / OttBd1).